Reading from the N-terminus, the 104-residue chain is Matrix Gla protein (104 aa).

The N-terminal stretch at 1 to 19 (MKSLLPLAILAALAVATLC) is a signal peptide. Glu-21 is modified (4-carboxyglutamate). Phosphoserine is present on residues Ser-22, Ser-25, and Ser-28. Positions 51–97 (RAKAQKRVQERNKPAYEINREACDDYKLCERYAMVYGYNAAYNRYFR) constitute a Gla domain. Residues Glu-60, Glu-67, and Glu-71 each carry the 4-carboxyglutamate modification. An intrachain disulfide couples Cys-73 to Cys-79.

This sequence belongs to the osteocalcin/matrix Gla protein family. Requires vitamin K-dependent gamma-carboxylation for its function.

It localises to the secreted. Functionally, associates with the organic matrix of bone and cartilage. Thought to act as an inhibitor of bone formation. The sequence is that of Matrix Gla protein (Mgp) from Mus musculus (Mouse).